The primary structure comprises 315 residues: Gamma-hemolysin component C (315 aa).

The first 29 residues, 1-29 (MLKNKILTTTLSVSLLAPLANPLLENAKA), serve as a signal peptide directing secretion.

It belongs to the aerolysin family. Toxicity requires sequential binding and synergistic association of a class S and a class F component which form heterooligomeric complexes. HlgB (class F) associates with either hlgA thus forming an AB toxin or with hlgC thus forming a CB toxin.

Its subcellular location is the secreted. Its function is as follows. Toxin that seems to act by forming pores in the membrane of the cell. Has a hemolytic and a leucotoxic activity. In Staphylococcus aureus (strain NCTC 8325 / PS 47), this protein is Gamma-hemolysin component C (hlgC).